The primary structure comprises 212 residues: Thymidine kinase (212 aa).

Residues 16–23 (GPMFSGKS) and 99–102 (DEAQ) contribute to the ATP site. Glutamate 100 functions as the Proton acceptor in the catalytic mechanism.

Belongs to the thymidine kinase family. Homotetramer.

It localises to the cytoplasm. It carries out the reaction thymidine + ATP = dTMP + ADP + H(+). The chain is Thymidine kinase from Deinococcus radiodurans (strain ATCC 13939 / DSM 20539 / JCM 16871 / CCUG 27074 / LMG 4051 / NBRC 15346 / NCIMB 9279 / VKM B-1422 / R1).